The sequence spans 634 residues: Phosphatase and actin regulator 2 (634 aa).

Disordered stretches follow at residues 1 to 32 (MDNA…KRKG), 84 to 344 (LPDQ…PLED), 412 to 471 (PQLL…ALAS), and 485 to 508 (NRPS…ERQE). A lipid anchor (N-myristoyl glycine) is attached at Asp-2. The segment covering 13–26 (IANSDGPTAGSQTP) has biased composition (polar residues). Ser-16 carries the post-translational modification Phosphoserine. Thr-25 bears the Phosphothreonine mark. One copy of the RPEL 1 repeat lies at 60 to 85 (AVLERKISTRQSREELIRRGVLKELP). Composition is skewed to basic and acidic residues over residues 108-120 (ESTR…KSEE) and 137-147 (EDKKENTENHS). Positions 153–162 (PALPPSAPPK) are enriched in pro residues. Low complexity-rich tracts occupy residues 231–247 (GSKA…SSRP) and 276–290 (TSHL…GTSD). Over residues 291-304 (LKGEPAETRVESFK) the composition is skewed to basic and acidic residues. Residues 324–341 (VPPPPVAPAPSPLAPPLP) are compositionally biased toward pro residues. Ser-423 is modified (phosphoserine). Residues 452–464 (TDDEDEDEDEDGS) show a composition bias toward acidic residues. RPEL repeat units follow at residues 477–502 (DTLA…QRTS), 515–540 (TKLV…KQKN), and 553–578 (RRLS…RFNE). The segment covering 488–508 (SKKELEDKNILQRTSEEERQE) has biased composition (basic and acidic residues). Residues Ser-522 and Ser-560 each carry the phosphoserine modification.

Belongs to the phosphatase and actin regulator family. Binds PPP1CA and actin.

Its subcellular location is the membrane. The protein is Phosphatase and actin regulator 2 (PHACTR2) of Homo sapiens (Human).